The following is a 457-amino-acid chain: tRNA-2-methylthio-N(6)-dimethylallyladenosine synthase (457 aa).

The region spanning 3-120 (KKVYVKTFGC…LPQMIDARRE (118 aa)) is the MTTase N-terminal domain. Positions 12, 49, 83, 157, 161, and 164 each coordinate [4Fe-4S] cluster. Residues 143-377 (RVEGPSAFVS…QATIEENVAR (235 aa)) form the Radical SAM core domain. The TRAM domain occupies 380–447 (QSMLGKVERI…PHSLRGELVL (68 aa)).

The protein belongs to the methylthiotransferase family. MiaB subfamily. In terms of assembly, monomer. The cofactor is [4Fe-4S] cluster.

It is found in the cytoplasm. It catalyses the reaction N(6)-dimethylallyladenosine(37) in tRNA + (sulfur carrier)-SH + AH2 + 2 S-adenosyl-L-methionine = 2-methylsulfanyl-N(6)-dimethylallyladenosine(37) in tRNA + (sulfur carrier)-H + 5'-deoxyadenosine + L-methionine + A + S-adenosyl-L-homocysteine + 2 H(+). Catalyzes the methylthiolation of N6-(dimethylallyl)adenosine (i(6)A), leading to the formation of 2-methylthio-N6-(dimethylallyl)adenosine (ms(2)i(6)A) at position 37 in tRNAs that read codons beginning with uridine. This chain is tRNA-2-methylthio-N(6)-dimethylallyladenosine synthase, found in Burkholderia thailandensis (strain ATCC 700388 / DSM 13276 / CCUG 48851 / CIP 106301 / E264).